The chain runs to 338 residues: S-adenosylmethionine:tRNA ribosyltransferase-isomerase (338 aa).

This sequence belongs to the QueA family. Monomer.

Its subcellular location is the cytoplasm. The enzyme catalyses 7-aminomethyl-7-carbaguanosine(34) in tRNA + S-adenosyl-L-methionine = epoxyqueuosine(34) in tRNA + adenine + L-methionine + 2 H(+). It functions in the pathway tRNA modification; tRNA-queuosine biosynthesis. In terms of biological role, transfers and isomerizes the ribose moiety from AdoMet to the 7-aminomethyl group of 7-deazaguanine (preQ1-tRNA) to give epoxyqueuosine (oQ-tRNA). This Francisella philomiragia subsp. philomiragia (strain ATCC 25017 / CCUG 19701 / FSC 153 / O#319-036) protein is S-adenosylmethionine:tRNA ribosyltransferase-isomerase.